The sequence spans 62 residues: MSSNKIINWFRRLREDWNRIITVARKPDRNFFSLNLKVTLLVLAVVGVLAYIIQLALTLIGV.

The helical transmembrane segment at 40 to 60 (LLVLAVVGVLAYIIQLALTLI) threads the bilayer.

Belongs to the SecE/SEC61-gamma family. In terms of assembly, component of the Sec protein translocase complex. Heterotrimer consisting of SecY (alpha), SecG (beta) and SecE (gamma) subunits. The heterotrimers can form oligomers, although 1 heterotrimer is thought to be able to translocate proteins. Interacts with the ribosome. May interact with SecDF, and other proteins may be involved.

It is found in the cell membrane. Essential subunit of the Sec protein translocation channel SecYEG. Clamps together the 2 halves of SecY. May contact the channel plug during translocation. This chain is Protein translocase subunit SecE, found in Saccharolobus solfataricus (strain ATCC 35092 / DSM 1617 / JCM 11322 / P2) (Sulfolobus solfataricus).